The sequence spans 24 residues: Lactadherin (24 aa).

The protein resides in the membrane. It is found in the secreted. The protein localises to the cytoplasmic vesicle. Its subcellular location is the secretory vesicle. It localises to the acrosome membrane. Functionally, specific ligand for the alpha-v/beta-3 and alpha-v/beta-5 receptors. Also binds to phosphatidylserine-enriched cell surfaces in a receptor-independent manner. Zona pellucida-binding protein which may play a role in gamete interaction. Contributes to phagocytic removal of apoptotic cells in many tissues. Plays an important role in the maintenance of intestinal epithelial homeostasis and the promotion of mucosal healing. Promotes VEGF-dependent neovascularization. This Equus asinus (Donkey) protein is Lactadherin.